A 469-amino-acid polypeptide reads, in one-letter code: Acetyl-CoA decarbonylase/synthase complex subunit beta 1 (469 aa).

[Ni-Fe-S] cluster is bound by residues Cys189, Cys192, Cys278, and Cys280.

Belongs to the CdhC family. Monomer. The ACDS complex is made up of alpha, epsilon, beta, gamma and delta chains with a probable stoichiometry of (alpha(2)epsilon(2))(4)-beta(8)-(gamma(1)delta(1))(8) (Potential). The cofactor is [Ni-Fe-S] cluster.

It carries out the reaction Co(I)-[corrinoid Fe-S protein] + acetyl-CoA + H(+) = methyl-Co(III)-[corrinoid Fe-S protein] + CO + CoA. The protein operates within one-carbon metabolism; methanogenesis from acetate. Part of a complex that catalyzes the reversible cleavage of acetyl-CoA, allowing growth on acetate as sole source of carbon and energy. The alpha-epsilon complex generates CO from CO(2), while the beta subunit (this protein) combines the CO with CoA and a methyl group to form acetyl-CoA. The methyl group, which is incorporated into acetyl-CoA, is transferred to the beta subunit by a corrinoid iron-sulfur protein (the gamma-delta complex). The sequence is that of Acetyl-CoA decarbonylase/synthase complex subunit beta 1 (cdhC1) from Methanosarcina acetivorans (strain ATCC 35395 / DSM 2834 / JCM 12185 / C2A).